We begin with the raw amino-acid sequence, 687 residues long: MDQHQHLNKTAESASSEKKKTRRCNGFKMFLAALSFSYIAKALGGIIMKISITQIERRFDISSSLAGLIDGSFEIGNLLVIVFVSYFGSKLHRPKLIGIGCLLMGTGSILTSLPHFFMGYYRYSKETNIDPSENSTSNLPNCLINQMLSLNRTPSEIIERGCVKESGSHMWIYVFMGNMLRGIGETPIVPLGISYIDDFAKEGHSSLYLGTVNVMGMTGLVFAFMLGSLFAKMYVDIGYVDLSTIRITPKDSRWVGAWWLGFLVSGIVSIISSIPFFFLPLNPNKPQKERKVSLFLHVLKTNDKRNQIANLTNRRKYITKNVTGFFQSLKSILTNPLYVIFVIFTLLHMSSYIASLTYIIKMVEQQYGWSASKTNFLLGVLALPAVAIGMFSGGYIIKKFKLSLVGLAKLAFCSATVHLLSQVLYFFLICESKSVAGLTLTYDGNSPVRSHVDVPLSYCNSECNCDESQWEPVCGNNGITYLSPCLAGCKSSSGNKEPIVFYNCSCVEVIGLQNKNYSAHLGECPRDDACTRKSYVYFVIQVLDAFLCAVGLTSYSVLVIRIVQPELKALAIGFHSMIMRSLGGILVPIYFGALIDTTCMKWSTNSCGARGACRIYNSTYLGRAFFGLKVALIFPVLVLLTVFIFVVRKKSHGKDTKVLENERQVMDEANLEFLNDSEHFVPSAEEQ.

Over Met-1–Met-29 the chain is Cytoplasmic. The chain crosses the membrane as a helical span at residues Phe-30–Ile-50. Residues Ser-51–Ser-63 lie on the Extracellular side of the membrane. The helical transmembrane segment at Ser-64–Val-84 threads the bilayer. Residues Ser-85 to Leu-96 lie on the Cytoplasmic side of the membrane. A helical membrane pass occupies residues Ile-97–Phe-117. The Extracellular portion of the chain corresponds to Met-118–Met-170. 2 N-linked (GlcNAc...) asparagine glycosylation sites follow: Asn-134 and Asn-151. The chain crosses the membrane as a helical span at residues Trp-171 to Leu-191. The Cytoplasmic portion of the chain corresponds to Gly-192–Ser-206. A helical membrane pass occupies residues Leu-207–Gly-227. Topologically, residues Ser-228–Trp-258 are extracellular. The chain crosses the membrane as a helical span at residues Trp-259–Leu-279. The Cytoplasmic portion of the chain corresponds to Pro-280–Val-339. The chain crosses the membrane as a helical span at residues Ile-340–Ile-360. Topologically, residues Lys-361–Phe-376 are extracellular. Residues Leu-377–Ile-397 traverse the membrane as a helical segment. At Lys-398–Lys-409 the chain is on the cytoplasmic side. A helical transmembrane segment spans residues Leu-410 to Cys-430. Topologically, residues Glu-431–Val-539 are extracellular. The region spanning Asp-453 to Glu-508 is the Kazal-like domain. 3 disulfides stabilise this stretch: Cys-459–Cys-489, Cys-465–Cys-485, and Cys-474–Cys-506. Residues Asn-503 and Asn-516 are each glycosylated (N-linked (GlcNAc...) asparagine). The helical transmembrane segment at Ile-540–Ile-560 threads the bilayer. At Arg-561–Lys-568 the chain is on the cytoplasmic side. The chain crosses the membrane as a helical span at residues Ala-569–Ile-589. The Extracellular portion of the chain corresponds to Tyr-590–Ala-624. Residue Asn-617 is glycosylated (N-linked (GlcNAc...) asparagine). Residues Phe-625–Phe-645 traverse the membrane as a helical segment. Residues Val-646–Gln-687 are Cytoplasmic-facing.

This sequence belongs to the organo anion transporter (TC 2.A.60) family. As to expression, expressed in the perivenular areas (centrilobular) of the liver (at protein level).

The protein localises to the smooth endoplasmic reticulum membrane. Its subcellular location is the cell membrane. It is found in the endoplasmic reticulum membrane. It carries out the reaction 17beta-estradiol 17-O-(beta-D-glucuronate)(out) = 17beta-estradiol 17-O-(beta-D-glucuronate)(in). It catalyses the reaction dehydroepiandrosterone 3-sulfate(out) = dehydroepiandrosterone 3-sulfate(in). The enzyme catalyses taurocholate(out) = taurocholate(in). The catalysed reaction is lithocholate(out) = lithocholate(in). Transport activity is induced by farnesoid X receptor (FXR) agonists such as chenodeoxycholate. Its function is as follows. Mediates the Na(+)-independent uptake of organic anions. Transports the conjugated steroids 17-beta-glucuronosyl estradiol (17beta-estradiol 17-O-(beta-D-glucuronate) or E2G) and dehydroepiandrosterone 3-sulfate (DHEAS) at the smooth endoplasmic reticulum membrane (SER), granting access to metabolizing enzymes. Contributes to the metabolism of bile acids such as taurocholate (cholyltaurine) and lithocholate, by functioning as a doorway between SER and cytosol, thereby decreasing their circulating levels and protecting the organism from their detergent properties. Regulates access or exit of drugs to the SER lumen. The chain is SLCO1B3-SLCO1B7 readthrough transcript protein from Homo sapiens (Human).